We begin with the raw amino-acid sequence, 428 residues long: Tyrosine--tRNA ligase (428 aa).

Tyr-37 contacts L-tyrosine. Positions 42-51 match the 'HIGH' region motif; sequence PTGSSLHAGH. Positions 175 and 179 each coordinate L-tyrosine. The short motif at 235–239 is the 'KMSKS' region element; the sequence is KFGKS. An ATP-binding site is contributed by Lys-238. Positions 358–415 constitute an S4 RNA-binding domain; that stretch reads ATILDLLVESGLEKSKGAARRTVGEGGAYVNNQRIEDIEWSPSAEELLHGSWLVLRKG.

The protein belongs to the class-I aminoacyl-tRNA synthetase family. TyrS type 1 subfamily. Homodimer.

Its subcellular location is the cytoplasm. It carries out the reaction tRNA(Tyr) + L-tyrosine + ATP = L-tyrosyl-tRNA(Tyr) + AMP + diphosphate + H(+). Catalyzes the attachment of tyrosine to tRNA(Tyr) in a two-step reaction: tyrosine is first activated by ATP to form Tyr-AMP and then transferred to the acceptor end of tRNA(Tyr). The polypeptide is Tyrosine--tRNA ligase (Corynebacterium jeikeium (strain K411)).